We begin with the raw amino-acid sequence, 131 residues long: Large ribosomal subunit protein bL20 (131 aa).

Belongs to the bacterial ribosomal protein bL20 family.

In terms of biological role, binds directly to 23S ribosomal RNA and is necessary for the in vitro assembly process of the 50S ribosomal subunit. It is not involved in the protein synthesizing functions of that subunit. This Mycolicibacterium paratuberculosis (strain ATCC BAA-968 / K-10) (Mycobacterium paratuberculosis) protein is Large ribosomal subunit protein bL20.